The sequence spans 540 residues: Chaperonin GroEL (540 aa).

ATP is bound by residues 29–32 (TLGP), 86–90 (DGTTT), Gly-413, 476–478 (NAA), and Asp-492.

It belongs to the chaperonin (HSP60) family. As to quaternary structure, forms a cylinder of 14 subunits composed of two heptameric rings stacked back-to-back. Interacts with the co-chaperonin GroES.

Its subcellular location is the cytoplasm. It carries out the reaction ATP + H2O + a folded polypeptide = ADP + phosphate + an unfolded polypeptide.. Functionally, together with its co-chaperonin GroES, plays an essential role in assisting protein folding. The GroEL-GroES system forms a nano-cage that allows encapsulation of the non-native substrate proteins and provides a physical environment optimized to promote and accelerate protein folding. This is Chaperonin GroEL from Streptococcus sanguinis.